Reading from the N-terminus, the 142-residue chain is Salivary protein 15a (142 aa).

The first 20 residues, 1–20 (MKYLGLALISAVFLIGACQA), serve as a signal peptide directing secretion. 3 disulfides stabilise this stretch: C27-C44, C40-C108, and C91-C117.

Belongs to the PBP/GOBP family. Female salivary gland (at protein level).

It localises to the secreted. Its function is as follows. Inhibits contact coagulation pathway activation in the host by sequestering anionic polymers, such as polyphosphate and dextran sulfate, and thus blocking interaction of protein components of the pathway with negatively charged surfaces. Inhibits dextran sulfate-mediated autoactivation of host coagulation factor XII (F12). Inhibits dextran sulfate-mediated autoactivation of host factor XI (F11). Inhibits polyphosphate-mediated activation of host F11 by thrombin (F2). May inhibit dextran sulfate-mediated bradykinin generation in host plasma. The chain is Salivary protein 15a from Phlebotomus duboscqi (Sandfly).